The sequence spans 209 residues: Imidazole glycerol phosphate synthase subunit HisH (209 aa).

Residues Pro4–Leu209 form the Glutamine amidotransferase type-1 domain. Cys82 serves as the catalytic Nucleophile. Residues His190 and Glu192 contribute to the active site.

In terms of assembly, heterodimer of HisH and HisF.

The protein resides in the cytoplasm. It catalyses the reaction 5-[(5-phospho-1-deoxy-D-ribulos-1-ylimino)methylamino]-1-(5-phospho-beta-D-ribosyl)imidazole-4-carboxamide + L-glutamine = D-erythro-1-(imidazol-4-yl)glycerol 3-phosphate + 5-amino-1-(5-phospho-beta-D-ribosyl)imidazole-4-carboxamide + L-glutamate + H(+). The catalysed reaction is L-glutamine + H2O = L-glutamate + NH4(+). The protein operates within amino-acid biosynthesis; L-histidine biosynthesis; L-histidine from 5-phospho-alpha-D-ribose 1-diphosphate: step 5/9. IGPS catalyzes the conversion of PRFAR and glutamine to IGP, AICAR and glutamate. The HisH subunit catalyzes the hydrolysis of glutamine to glutamate and ammonia as part of the synthesis of IGP and AICAR. The resulting ammonia molecule is channeled to the active site of HisF. In Leifsonia xyli subsp. xyli (strain CTCB07), this protein is Imidazole glycerol phosphate synthase subunit HisH.